A 400-amino-acid chain; its full sequence is Large envelope protein (400 aa).

Met-1 carries the N-acetylmethionine modification. A lipid anchor (N-myristoyl glycine; by host) is attached at Gly-2. Residues 2-119 (GAPLSTTRRG…PPLRDTHPQA (118 aa)) form a pre-S1 region. The pre-S stretch occupies residues 2 to 174 (GAPLSTTRRG…FSKTGGPAMN (173 aa)). Residues 2–181 (GAPLSTTRRG…AMNMDSITSG (180 aa)) lie on the Virion surface; in external conformation side of the membrane. Over 2–253 (GAPLSTTRRG…PGYRWMCLRR (252 aa)) the chain is Intravirion; in internal conformation. Pro-4 carries an N-linked (GlcNAc...) asparagine glycan. The interval 84–114 (VLTTLPADPPPASTNRRSGRKPTPVSPPLRD) is disordered. The segment at 120–174 (MQWNSTQFHQALLDPRVRALYFPAGGSSSETQNPAPTIASLTSSIFSKTGGPAMN) is pre-S2. Residues 182 to 202 (LLGPLLVLQAVCFLLTKILTI) form a helical membrane-spanning segment. Topologically, residues 203 to 253 (PQSLDSWWTSLNFLGGLPGCPGQNSQSPTSNHLPTSCPPTCPGYRWMCLRR) are intravirion; in external conformation. A helical membrane pass occupies residues 254-274 (FIIFLFILLLCLIFLLVLLDY). The Virion surface portion of the chain corresponds to 275–348 (QGMLPVCPLI…WASARFSWLS (74 aa)). Residue Asn-320 is glycosylated (N-linked (GlcNAc...) asparagine; by host). A helical transmembrane segment spans residues 349-369 (LLVQFVQWCVGLSPTVWLLVI). Residues 370-375 (WMIWYW) are Intravirion-facing. Residues 376–398 (GPNLCSILSPFIPLLPIFCYLWV) traverse the membrane as a helical segment. Residues 399–400 (SI) lie on the Virion surface side of the membrane.

This sequence belongs to the orthohepadnavirus major surface antigen family. In its internal form (Li-HBsAg), interacts with the capsid protein and with the isoform S. Interacts with host chaperone CANX. In terms of assembly, associates with host chaperone CANX through its pre-S2 N glycan; this association may be essential for isoform M proper secretion. As to quaternary structure, interacts with isoform L. Interacts with the antigens of satellite virus HDV (HDVAgs); this interaction is required for encapsidation of HDV genomic RNA. In terms of processing, isoform M is N-terminally acetylated by host at a ratio of 90%, and N-glycosylated by host at the pre-S2 region. Post-translationally, myristoylated.

It is found in the virion membrane. Its function is as follows. The large envelope protein exists in two topological conformations, one which is termed 'external' or Le-HBsAg and the other 'internal' or Li-HBsAg. In its external conformation the protein attaches the virus to cell receptors and thereby initiating infection. This interaction determines the species specificity and liver tropism. This attachment induces virion internalization predominantly through caveolin-mediated endocytosis. The large envelope protein also assures fusion between virion membrane and endosomal membrane. In its internal conformation the protein plays a role in virion morphogenesis and mediates the contact with the nucleocapsid like a matrix protein. In terms of biological role, the middle envelope protein plays an important role in the budding of the virion. It is involved in the induction of budding in a nucleocapsid independent way. In this process the majority of envelope proteins bud to form subviral lipoprotein particles of 22 nm of diameter that do not contain a nucleocapsid. The sequence is that of Large envelope protein from Homo sapiens (Human).